We begin with the raw amino-acid sequence, 119 residues long: Hemerythrin-like protein (119 aa).

His26, His56, Glu60, His75, His79, His107, and Asp112 together coordinate Fe cation.

It belongs to the hemerythrin family.

Functionally, oxygen-binding protein. The oxygen-binding site contains two iron atoms. This is Hemerythrin-like protein (nfa1) from Naegleria fowleri (Brain eating amoeba).